A 463-amino-acid polypeptide reads, in one-letter code: MAVDRKIRIAVVGGGPGGVIAALALSKSPNVEIDLYEAATAFGDIGLSLGMPWRPWRILRLLGLQGYLAALLPPDQIPKEDVTVPTIHYRKSDQAVGEDIFTCTSLSGYTRFRRSHFHAALLPHLPSNCKTYTSKRLVSYAEPSNASDPIVITFADGTTAECDVLVGADGIKSPTRASMYNYAADEAEKAGRSAEANDLRSKIRAKFSGVEVYRSVISAEQLRAAAPDHHAFRCPTQFLGKEKVRMPTYPIQSENSQFLNCALYICDYSREGEDYPEPWVTDVEAKDLRSSLPDWEPEAQAAVSCMGEVVSRWAICTLSPLPFFQRSRVVLLGDAAVRVTTPFSTFSSDHCQTLACYDELPRCRLRPGDDAYILSEILTHPAVTRDNVQKALEIYSEVRVPMSTHVLESSRRTGMDCALHDEVAAADLKSLGERMQQEMVWAWEWNPEDEKKKALDLVEERLV.

3 residues coordinate FAD: glutamate 37, glycine 50, and arginine 114. Arginine 200 is a catalytic residue. Aspartate 334 lines the FAD pocket.

The protein belongs to the paxM FAD-dependent monooxygenase family.

Its pathway is mycotoxin biosynthesis. Functionally, FAD-dependent monooxygenase; part of the gene cluster that mediates the biosynthesis of strobilurin A, an antifungal polyketide that contains a key beta-methoxyacrylate toxophore that targets the complex III of the mitochondrial electron transport chain. Strobilurin biosynthesis begins with construction of benzoyl CoA by step-wise elimination of ammonia from phenylalanine by the phenylalanine ammonia-lyase str11, oxygenation by str8 and retro-Claisen reaction to form benzoic acid, which is activated to its CoA thiolester benzoyl CoA by the dedicated CoA ligase str10. Benzoyl CoA forms the starter unit for the highly reducing polyketide synthase stpks1 that produces the polyketide prestrobilutin A. The FAD-dependent oxygenase str9 then catalyzes the key oxidative rearrangement responsible for the creation of the beta-methoxyacrylate toxophore. Str9 performs epoxidation of the 2,3 olefin of prestrobilutin A, followed by Meinwald rearrangement to furnish the aldehyde intermediate. Rapid enolization of the aldehyde intermediate would give the beta-methoxyacrylate skeleton and methylations catalyzed by str2 and str3 complete the synthesis and lead to the production of strobilurin A. The short-chain dehydrogenase stl2 and the dehydrogenase str4 play a role in the shunt pathway leading to the production of bolineol. The cluster encodes no obvious halogenase gene that could be involved in production of strobilurin B, nor any obvious dimethylallyl-transferase that could be involved in the production of strobilurin G. It is possible that unknown proteins encoded in, or near, the cluster (such as str1 or stl1) may form new classes of halogenases or dimethylally-transferases, or that the responsible genes are located elsewhere on the genome. Similarly, proteins encoded by str5/str6 hydrolases appear to have no chemical role in the biosynthesis of strobilurin A. Finally, no obvious self-resistance gene is found within the cluster. This Strobilurus tenacellus protein is FAD-dependent monooxygenase str9.